A 464-amino-acid polypeptide reads, in one-letter code: Meiotic plaque component protein 54 (464 aa).

A disordered region spans residues 71-102; it reads SISTTITPNKSSLKSPRGKRASKNSFDNETKL. Coiled coils occupy residues 99 to 119, 156 to 193, and 231 to 365; these read ETKL…VNRC, KAEC…DHLL, and SINS…LQTQ.

As to quaternary structure, interacts directly with SPO21/MPC70, NUD1, SPO74 and SPC42. Probable component of a spindle pole body (SPB) complex composed of ADY3, SSP1, DON1, MPC54, SPO21/MPC70, NUD1 and CNM67.

The protein resides in the prospore membrane. Its subcellular location is the cytoplasm. It localises to the cytoskeleton. The protein localises to the microtubule organizing center. It is found in the spindle pole body. The protein resides in the spindle pole. Involved in the pathway that organizes the shaping and sizing of the prospore membrane (PSM) during sporulation. This Saccharomyces cerevisiae (strain ATCC 204508 / S288c) (Baker's yeast) protein is Meiotic plaque component protein 54 (MPC54).